Reading from the N-terminus, the 359-residue chain is Probable mannitol dehydrogenase (359 aa).

7 residues coordinate Zn(2+): C50, H72, C103, C106, C109, C117, and C165.

The protein belongs to the zinc-containing alcohol dehydrogenase family. Zn(2+) serves as cofactor.

It catalyses the reaction D-mannitol + NAD(+) = D-mannose + NADH + H(+). Its function is as follows. Oxidizes mannitol to mannose. Provides the initial step by which translocated mannitol is committed to central metabolism and, by regulating mannitol pool size, is important in regulating salt tolerance at the cellular level. In Medicago sativa (Alfalfa), this protein is Probable mannitol dehydrogenase (CAD1).